Here is a 271-residue protein sequence, read N- to C-terminus: Aspartate/glutamate leucyltransferase (271 aa).

This sequence belongs to the R-transferase family. Bpt subfamily.

The protein localises to the cytoplasm. The enzyme catalyses N-terminal L-glutamyl-[protein] + L-leucyl-tRNA(Leu) = N-terminal L-leucyl-L-glutamyl-[protein] + tRNA(Leu) + H(+). The catalysed reaction is N-terminal L-aspartyl-[protein] + L-leucyl-tRNA(Leu) = N-terminal L-leucyl-L-aspartyl-[protein] + tRNA(Leu) + H(+). Functionally, functions in the N-end rule pathway of protein degradation where it conjugates Leu from its aminoacyl-tRNA to the N-termini of proteins containing an N-terminal aspartate or glutamate. The sequence is that of Aspartate/glutamate leucyltransferase from Acinetobacter baumannii (strain SDF).